Consider the following 243-residue polypeptide: Probable transcriptional regulatory protein BB_0025 (243 aa).

It belongs to the TACO1 family.

It is found in the cytoplasm. This chain is Probable transcriptional regulatory protein BB_0025, found in Borreliella burgdorferi (strain ATCC 35210 / DSM 4680 / CIP 102532 / B31) (Borrelia burgdorferi).